A 284-amino-acid chain; its full sequence is Stomatin (284 aa).

Residues 1–31 (MSDKRQSSHVQSQRIPESFRENSKTELGACG) lie on the Cytoplasmic side of the membrane. Phosphoserine is present on Ser-18. The S-palmitoyl cysteine moiety is linked to residue Cys-30. An intramembrane segment occupies 32 to 52 (WILVAASFFFVIITFPISIWI). Residues 53–284 (CIKIVKEYER…MLQGIMGSNH (232 aa)) are Cytoplasmic-facing. Cys-87 carries the S-palmitoyl cysteine lipid modification. Residues Ser-161 and Ser-244 each carry the phosphoserine modification. The required for homooligomerization stretch occupies residues 265–273 (STIVFPLPV). Residues 267 to 269 (IVF) form a required for lipid raft association region. The segment at 273–284 (VDMLQGIMGSNH) is interaction with LANCL1.

This sequence belongs to the band 7/mec-2 family. In terms of assembly, interacts with LANCL1. Interacts with SLC2A1. Interacts with SLC4A1; this interaction positively regulates SLC4A1 activity. Identified in large complexes with SLC40A1, SLC14A1, SLC29A1 and AQP1. Homodimer and higher order homooligomers. The homodimer is banana-shaped. Interacts with ASIC1, ASIC2 and ASIC3. Interacts with STOML1; may redistribute STOM from the plasma membrane to late endosomes. Expressed in all sensory neurons of the dorsal root ganglia. In the CNS, expressed in many neurons of the spinal cord, medulla and pons. Expressed only in scattered neurons in the cortex, hippocampus, thalamus and basal ganglia. In the cerebellum, expressed in all Purkinje cells (at protein level). Widely expressed with high levels in heart, liver, skeletal muscle and testis and low levels in lung, brain and spleen.

Its subcellular location is the cell membrane. The protein localises to the cytoplasm. The protein resides in the cytoskeleton. It is found in the membrane raft. It localises to the melanosome. Its subcellular location is the cytoplasmic vesicle. Functionally, regulates ion channel activity and transmembrane ion transport. Regulates ASIC2 and ASIC3 channel activity. This is Stomatin from Mus musculus (Mouse).